Consider the following 447-residue polypeptide: Voltage-gated purine nucleotide uniporter SLC17A9 (447 aa).

A disordered region spans residues 1-26 (MPSQRSSLMQPIPEETRKTPSAAAED). The span at 14 to 26 (EETRKTPSAAAED) shows a compositional bias: basic and acidic residues. The next 11 helical transmembrane spans lie at 36 to 58 (LWTG…MPVC), 74 to 94 (GIVL…GGHL), 103 to 123 (VILL…LLAH), 129 to 149 (LAFV…YFPA), 169 to 189 (TVGA…SVLL), 197 to 217 (VFYF…KYLL), 252 to 272 (VWAV…LLSW), 287 to 307 (WVFN…SGFI), 327 to 347 (VMGL…TSFL), 380 to 400 (GFLF…GVCL), and 413 to 433 (CVFH…LVFG).

The protein belongs to the major facilitator superfamily. Sodium/anion cotransporter family.

Its subcellular location is the cytoplasmic vesicle. The protein resides in the secretory vesicle. It localises to the chromaffin granule membrane. The protein localises to the secretory vesicle membrane. It is found in the lysosome membrane. The enzyme catalyses ATP(in) = ATP(out). The catalysed reaction is ADP(in) = ADP(out). It carries out the reaction GTP(in) = GTP(out). With respect to regulation, activity is chloride-dependent. In terms of biological role, voltage-gated ATP nucleotide uniporter that can also transport the purine nucleotides ADP and GTP. Uses the membrane potential as the driving force to control ATP accumulation in lysosomes and secretory vesicles. By controlling ATP storage in lysosomes, regulates ATP-dependent proteins of these organelles. Also indirectly regulates the exocytosis of ATP through its import into lysosomes in astrocytes and secretory vesicles such as adrenal chromaffin granules, mucin granules and synaptic vesicles. This is Voltage-gated purine nucleotide uniporter SLC17A9 from Rattus norvegicus (Rat).